The following is a 216-amino-acid chain: Holliday junction branch migration complex subunit RuvA (216 aa).

The interval 1–64 (MISFIKGVLI…EDAQQLYGFK (64 aa)) is domain I. The interval 65–143 (SKVDKKVFQE…KMANEIYAQT (79 aa)) is domain II. The flexible linker stretch occupies residues 144-163 (SGTTTTSQDSQAQQAPTSVV). The segment at 164–216 (LANSIFNESVDALLALGYKQKDAEKMARSAMGDATTAAEVIRKALQGSIKSKG) is domain III.

This sequence belongs to the RuvA family. As to quaternary structure, homotetramer. Forms an RuvA(8)-RuvB(12)-Holliday junction (HJ) complex. HJ DNA is sandwiched between 2 RuvA tetramers; dsDNA enters through RuvA and exits via RuvB. An RuvB hexamer assembles on each DNA strand where it exits the tetramer. Each RuvB hexamer is contacted by two RuvA subunits (via domain III) on 2 adjacent RuvB subunits; this complex drives branch migration. In the full resolvosome a probable DNA-RuvA(4)-RuvB(12)-RuvC(2) complex forms which resolves the HJ.

Its subcellular location is the cytoplasm. The RuvA-RuvB-RuvC complex processes Holliday junction (HJ) DNA during genetic recombination and DNA repair, while the RuvA-RuvB complex plays an important role in the rescue of blocked DNA replication forks via replication fork reversal (RFR). RuvA specifically binds to HJ cruciform DNA, conferring on it an open structure. The RuvB hexamer acts as an ATP-dependent pump, pulling dsDNA into and through the RuvAB complex. HJ branch migration allows RuvC to scan DNA until it finds its consensus sequence, where it cleaves and resolves the cruciform DNA. In Francisella tularensis subsp. holarctica (strain FTNF002-00 / FTA), this protein is Holliday junction branch migration complex subunit RuvA.